Consider the following 141-residue polypeptide: Nucleoside diphosphate kinase (141 aa).

Residues Lys11, Phe59, Arg87, Thr93, Arg104, and Asn114 each coordinate ATP. The Pros-phosphohistidine intermediate role is filled by His117.

This sequence belongs to the NDK family. In terms of assembly, homotetramer. Mg(2+) is required as a cofactor.

The protein localises to the cytoplasm. The enzyme catalyses a 2'-deoxyribonucleoside 5'-diphosphate + ATP = a 2'-deoxyribonucleoside 5'-triphosphate + ADP. The catalysed reaction is a ribonucleoside 5'-diphosphate + ATP = a ribonucleoside 5'-triphosphate + ADP. Its function is as follows. Major role in the synthesis of nucleoside triphosphates other than ATP. The ATP gamma phosphate is transferred to the NDP beta phosphate via a ping-pong mechanism, using a phosphorylated active-site intermediate. This is Nucleoside diphosphate kinase from Delftia acidovorans (strain DSM 14801 / SPH-1).